We begin with the raw amino-acid sequence, 256 residues long: Protein TV0584 (256 aa).

This sequence belongs to the CinA family.

In Thermoplasma volcanium (strain ATCC 51530 / DSM 4299 / JCM 9571 / NBRC 15438 / GSS1), this protein is Protein TV0584.